The sequence spans 99 residues: Small ribosomal subunit protein bS18 (99 aa).

The disordered stretch occupies residues 1–25 (MAESKGRPGSASQRPTGGDKAIAGQ).

It belongs to the bacterial ribosomal protein bS18 family. As to quaternary structure, part of the 30S ribosomal subunit. Forms a tight heterodimer with protein bS6.

Binds as a heterodimer with protein bS6 to the central domain of the 16S rRNA, where it helps stabilize the platform of the 30S subunit. The sequence is that of Small ribosomal subunit protein bS18 from Solibacter usitatus (strain Ellin6076).